The following is a 35-amino-acid chain: Small toxic polypeptide LdrD (35 aa).

Residues 10–32 form a helical membrane-spanning segment; that stretch reads FWHDLAAPVIAGILASMIVNWLN.

The protein belongs to the Ldr toxic peptide family.

It is found in the cell inner membrane. Functionally, toxic component of a type I toxin-antitoxin (TA) system. Overexpression causes rapid cell killing and nucleoid condensation of the host cell. Overexpression induces stress-response and a number of membrane protein genes. May inhibit ATP synthesis due to its insertion in the cell inner membrane. The polypeptide is Small toxic polypeptide LdrD (ldrD) (Escherichia coli (strain K12)).